Here is a 225-residue protein sequence, read N- to C-terminus: NAD(P)H-quinone oxidoreductase subunit K, chloroplastic (225 aa).

[4Fe-4S] cluster contacts are provided by C43, C44, C108, and C139.

Belongs to the complex I 20 kDa subunit family. In terms of assembly, NDH is composed of at least 16 different subunits, 5 of which are encoded in the nucleus. It depends on [4Fe-4S] cluster as a cofactor.

Its subcellular location is the plastid. It localises to the chloroplast thylakoid membrane. It carries out the reaction a plastoquinone + NADH + (n+1) H(+)(in) = a plastoquinol + NAD(+) + n H(+)(out). The catalysed reaction is a plastoquinone + NADPH + (n+1) H(+)(in) = a plastoquinol + NADP(+) + n H(+)(out). In terms of biological role, NDH shuttles electrons from NAD(P)H:plastoquinone, via FMN and iron-sulfur (Fe-S) centers, to quinones in the photosynthetic chain and possibly in a chloroplast respiratory chain. The immediate electron acceptor for the enzyme in this species is believed to be plastoquinone. Couples the redox reaction to proton translocation, and thus conserves the redox energy in a proton gradient. The protein is NAD(P)H-quinone oxidoreductase subunit K, chloroplastic of Amborella trichopoda.